A 295-amino-acid polypeptide reads, in one-letter code: Protoheme IX farnesyltransferase 2 (295 aa).

9 helical membrane-spanning segments follow: residues 9–29, 36–56, 83–103, 108–128, 135–155, 163–183, 209–229, 230–250, and 264–284; these read ITKP…FFLA, FALF…GCVF, LPLA…LLYV, LSAF…SLWL, GTLV…CAVS, VTLL…IAIF, IVLY…GGYA, GLGY…MAWG, and VFGF…VDSQ.

The protein belongs to the UbiA prenyltransferase family. Protoheme IX farnesyltransferase subfamily.

It localises to the cell inner membrane. The enzyme catalyses heme b + (2E,6E)-farnesyl diphosphate + H2O = Fe(II)-heme o + diphosphate. It participates in porphyrin-containing compound metabolism; heme O biosynthesis; heme O from protoheme: step 1/1. In terms of biological role, converts heme B (protoheme IX) to heme O by substitution of the vinyl group on carbon 2 of heme B porphyrin ring with a hydroxyethyl farnesyl side group. The sequence is that of Protoheme IX farnesyltransferase 2 from Pseudomonas putida (strain ATCC 47054 / DSM 6125 / CFBP 8728 / NCIMB 11950 / KT2440).